The chain runs to 786 residues: Digalactosyldiacylglycerol synthase 1, chloroplastic (786 aa).

Residues 1-25 (MASQRQPPSSSNAFSFLSKGWREVR) constitute a chloroplast transit peptide.

The protein belongs to the glycosyltransferase group 1 family. Glycosyltransferase 4 subfamily. As to expression, high expression in nodules infected cells, but low in nodule inner cortex and root central cylinder.

It localises to the plastid. The protein resides in the chloroplast outer membrane. The protein localises to the plastid outer membrane. It catalyses the reaction a 1,2-diacyl-3-O-(beta-D-galactosyl)-sn-glycerol + UDP-alpha-D-galactose = a 1,2-diacyl-3-O-[alpha-D-galactosyl-(1-&gt;6)-beta-D-galactosyl]-sn-glycerol + UDP + H(+). Functionally, involved in the synthesis of diacylglycerol galactolipids that are specifically found in thylakoid and in nodule peribacteroid membranes. Specific for alpha-glycosidic linkages. This Lotus japonicus (Lotus corniculatus var. japonicus) protein is Digalactosyldiacylglycerol synthase 1, chloroplastic.